Consider the following 184-residue polypeptide: MISNGLILAAAEGANPLIPNPWEILVVVVGFALLMFIVIKFIVPTLEKSYQDRVEAIEGGLAKAEKAQAEANAMMADYESQLADARTEANRIREDARTEAAEIVAEARERATAEATRVFEQAQAQIAAERQQAAAQLKREVGSLATTLAGKIVGESLEDDARSQRVVDRFLADLDRHQSAGVAE.

A helical membrane pass occupies residues 24–44; sequence ILVVVVGFALLMFIVIKFIVP.

It belongs to the ATPase B chain family. In terms of assembly, F-type ATPases have 2 components, F(1) - the catalytic core - and F(0) - the membrane proton channel. F(1) has five subunits: alpha(3), beta(3), gamma(1), delta(1), epsilon(1). F(0) has three main subunits: a(1), b(2) and c(10-14). The alpha and beta chains form an alternating ring which encloses part of the gamma chain. F(1) is attached to F(0) by a central stalk formed by the gamma and epsilon chains, while a peripheral stalk is formed by the delta and b chains.

The protein resides in the cell membrane. F(1)F(0) ATP synthase produces ATP from ADP in the presence of a proton or sodium gradient. F-type ATPases consist of two structural domains, F(1) containing the extramembraneous catalytic core and F(0) containing the membrane proton channel, linked together by a central stalk and a peripheral stalk. During catalysis, ATP synthesis in the catalytic domain of F(1) is coupled via a rotary mechanism of the central stalk subunits to proton translocation. In terms of biological role, component of the F(0) channel, it forms part of the peripheral stalk, linking F(1) to F(0). This chain is ATP synthase subunit b (atpF), found in Micrococcus luteus (strain ATCC 4698 / DSM 20030 / JCM 1464 / CCM 169 / CCUG 5858 / IAM 1056 / NBRC 3333 / NCIMB 9278 / NCTC 2665 / VKM Ac-2230) (Micrococcus lysodeikticus).